The sequence spans 436 residues: ARDMTKQALPAVSEVTKDTLEEFKTADKVVLVAYFAADDKASNETFTSVANGLRDNFLFGATNDAALAKAEGVKQPGLVCTSPSTTARTSSPRPSMRTYPRLRKVASTPLIGEVGPETYAGYMAAGIPLAYIFAETPEEREEFAKELKPLALKHKGEINFATIDAKSFGQHAGNLNLKVGTWPAFAIQRTEKNEKFPTNQEAKITEKEIGKFVDDFLAGKIDPSIKSEPIPESNDGPVTVVVAHNYKDVVIDNDKDVLVEFYAPWCGHCKALAPKYEELGQLYASDELSKLVTIAKVDATLNDVPDEIQGFLPSSLFPLARRMPQSTTLVPHCRGSRPVHRRERLTQASASVGEAVEDATESAKASASSATDSAASAVSEGTETVKSGASVASDSASSAASEATKSVKSAASEVTNSASSAASEASASASSVKDEL.

Residues 216–365 form the Thioredoxin domain; sequence FLAGKIDPSI…VEDATESAKA (150 aa). Catalysis depends on nucleophile residues Cys-266 and Cys-269. Cys-266 and Cys-269 are disulfide-bonded. The tract at residues 328–436 is disordered; sequence TLVPHCRGSR…ASASSVKDEL (109 aa). Residues 334 to 343 are compositionally biased toward basic residues; the sequence is RGSRPVHRRE. 2 stretches are compositionally biased toward low complexity: residues 362-377 and 385-436; these read SAKA…AASA and VKSG…KDEL. A Prevents secretion from ER motif is present at residues 433-436; that stretch reads KDEL.

It belongs to the protein disulfide isomerase family.

The protein resides in the endoplasmic reticulum lumen. The enzyme catalyses Catalyzes the rearrangement of -S-S- bonds in proteins.. In terms of biological role, participates in the folding of proteins containing disulfide bonds, may be involved in glycosylation, prolyl hydroxylation and triglyceride transfer. The sequence is that of Protein disulfide-isomerase from Alternaria alternata (Alternaria rot fungus).